The following is a 1401-amino-acid chain: DNA-directed RNA polymerase subunit beta' (1401 aa).

The Zn(2+) site is built by Cys70, Cys72, Cys85, and Cys88. Mg(2+)-binding residues include Asp460, Asp462, and Asp464. Residues Cys814, Cys888, Cys895, and Cys898 each contribute to the Zn(2+) site. The interval 1369-1388 (RQKQKAVEQEGPSAEQATDN) is disordered.

The protein belongs to the RNA polymerase beta' chain family. The RNAP catalytic core consists of 2 alpha, 1 beta, 1 beta' and 1 omega subunit. When a sigma factor is associated with the core the holoenzyme is formed, which can initiate transcription. Requires Mg(2+) as cofactor. It depends on Zn(2+) as a cofactor.

It carries out the reaction RNA(n) + a ribonucleoside 5'-triphosphate = RNA(n+1) + diphosphate. Its function is as follows. DNA-dependent RNA polymerase catalyzes the transcription of DNA into RNA using the four ribonucleoside triphosphates as substrates. This is DNA-directed RNA polymerase subunit beta' from Aliivibrio fischeri (strain ATCC 700601 / ES114) (Vibrio fischeri).